The chain runs to 904 residues: Structural polyprotein (904 aa).

Disordered stretches follow at residues 1 to 27, 35 to 54, and 320 to 348; these read ADQETNTSNVHNTQLASTSEENSVETE, VETPNRINTPMAQDTSSARS, and NNSNKMATPVKEKTKNIPKPKTENPKIGP. Positions 39–53 are enriched in polar residues; sequence NRINTPMAQDTSSAR. The segment covering 329–343 has biased composition (basic and acidic residues); it reads VKEKTKNIPKPKTEN.

The protein belongs to the picornaviruses polyprotein family. In terms of processing, specific enzymatic cleavages in vivo yield mature proteins.

It is found in the virion. Its subcellular location is the host cytoplasm. Its function is as follows. Structural polyprotein: precursor of all the viral capsid proteins. In terms of biological role, forms, together with protein VP2 and protein VP3, an icosahedral capsid protecting the viral RNA genome. The icosahedral capsid has a pseudo-T=3 symmetry with a diameter of approximately 300 Angstroms, and is composed of 60 copies of each capsid proteins. Forms, together with protein VP1 and protein VP3, an icosahedral capsid protecting the viral RNA genome. The icosahedral capsid has a pseudo-T=3 symmetry with a diameter of approximately 300 Angstroms, and is composed of 60 copies of each capsid proteins. Functionally, forms, together with protein VP1 and protein VP2, an icosahedral capsid protecting the viral RNA genome. The icosahedral capsid has a pseudo-T=3 symmetry with a diameter of approximately 300 Angstroms, and is composed of 60 copies of each capsid proteins. This Apis mellifera (Honeybee) protein is Structural polyprotein.